Here is a 256-residue protein sequence, read N- to C-terminus: Imidazole glycerol phosphate synthase subunit HisF (256 aa).

Catalysis depends on residues aspartate 12 and aspartate 131.

This sequence belongs to the HisA/HisF family. In terms of assembly, heterodimer of HisH and HisF.

It is found in the cytoplasm. The enzyme catalyses 5-[(5-phospho-1-deoxy-D-ribulos-1-ylimino)methylamino]-1-(5-phospho-beta-D-ribosyl)imidazole-4-carboxamide + L-glutamine = D-erythro-1-(imidazol-4-yl)glycerol 3-phosphate + 5-amino-1-(5-phospho-beta-D-ribosyl)imidazole-4-carboxamide + L-glutamate + H(+). It functions in the pathway amino-acid biosynthesis; L-histidine biosynthesis; L-histidine from 5-phospho-alpha-D-ribose 1-diphosphate: step 5/9. Functionally, IGPS catalyzes the conversion of PRFAR and glutamine to IGP, AICAR and glutamate. The HisF subunit catalyzes the cyclization activity that produces IGP and AICAR from PRFAR using the ammonia provided by the HisH subunit. This Pseudomonas entomophila (strain L48) protein is Imidazole glycerol phosphate synthase subunit HisF.